Consider the following 285-residue polypeptide: ATP phosphoribosyltransferase (285 aa).

Belongs to the ATP phosphoribosyltransferase family. Long subfamily. Mg(2+) is required as a cofactor.

It is found in the cytoplasm. The enzyme catalyses 1-(5-phospho-beta-D-ribosyl)-ATP + diphosphate = 5-phospho-alpha-D-ribose 1-diphosphate + ATP. The protein operates within amino-acid biosynthesis; L-histidine biosynthesis; L-histidine from 5-phospho-alpha-D-ribose 1-diphosphate: step 1/9. With respect to regulation, feedback inhibited by histidine. Catalyzes the condensation of ATP and 5-phosphoribose 1-diphosphate to form N'-(5'-phosphoribosyl)-ATP (PR-ATP). Has a crucial role in the pathway because the rate of histidine biosynthesis seems to be controlled primarily by regulation of HisG enzymatic activity. In Metallosphaera sedula (strain ATCC 51363 / DSM 5348 / JCM 9185 / NBRC 15509 / TH2), this protein is ATP phosphoribosyltransferase.